Here is a 544-residue protein sequence, read N- to C-terminus: Chaperonin GroEL 3 (544 aa).

ATP-binding positions include 30 to 33, K51, 87 to 91, G415, and D496; these read TLGP and DGTTT.

The protein belongs to the chaperonin (HSP60) family. As to quaternary structure, forms a cylinder of 14 subunits composed of two heptameric rings stacked back-to-back. Interacts with the co-chaperonin GroES.

It is found in the cytoplasm. It carries out the reaction ATP + H2O + a folded polypeptide = ADP + phosphate + an unfolded polypeptide.. Functionally, together with its co-chaperonin GroES, plays an essential role in assisting protein folding. The GroEL-GroES system forms a nano-cage that allows encapsulation of the non-native substrate proteins and provides a physical environment optimized to promote and accelerate protein folding. The protein is Chaperonin GroEL 3 of Rhizobium etli (strain ATCC 51251 / DSM 11541 / JCM 21823 / NBRC 15573 / CFN 42).